We begin with the raw amino-acid sequence, 354 residues long: Uroporphyrinogen decarboxylase (354 aa).

Residues 27 to 31 (RQAGR), aspartate 77, tyrosine 154, threonine 209, and histidine 327 each bind substrate.

It belongs to the uroporphyrinogen decarboxylase family. In terms of assembly, homodimer.

It localises to the cytoplasm. It catalyses the reaction uroporphyrinogen III + 4 H(+) = coproporphyrinogen III + 4 CO2. The protein operates within porphyrin-containing compound metabolism; protoporphyrin-IX biosynthesis; coproporphyrinogen-III from 5-aminolevulinate: step 4/4. Its function is as follows. Catalyzes the decarboxylation of four acetate groups of uroporphyrinogen-III to yield coproporphyrinogen-III. In Escherichia coli O17:K52:H18 (strain UMN026 / ExPEC), this protein is Uroporphyrinogen decarboxylase.